The chain runs to 160 residues: Large ribosomal subunit protein eL29 (160 aa).

Over residues 1–26 (MAKSKNHTTHNQSRKWHRNGIKKPRS) the composition is skewed to basic residues. The tract at residues 1–32 (MAKSKNHTTHNQSRKWHRNGIKKPRSQRYESL) is disordered. Position 5 is an N6-methyllysine (Lys5). A Phosphoserine modification is found at Ser31. Position 33 is an N6-acetyllysine (Lys33). The segment at 119–160 (CRPKSQAKAQSKAKATAGGTAAAPVPPASAPKGAQAPTKAPQ) is disordered. Residues 121–141 (PKSQAKAQSKAKATAGGTAAA) show a composition bias toward low complexity.

It belongs to the eukaryotic ribosomal protein eL29 family. Component of the large ribosomal subunit.

It localises to the cytoplasm. Component of the large ribosomal subunit. The ribosome is a large ribonucleoprotein complex responsible for the synthesis of proteins in the cell. The sequence is that of Large ribosomal subunit protein eL29 (RPL29) from Sus scrofa (Pig).